The following is a 60-amino-acid chain: MTCCNQQSSQPKTTTNCAESSCYKKTWSDHRGTRIERGCGCPQVKKGIKLECCHTNECNN.

4 cysteine pairs are disulfide-bonded: Cys3-Cys22, Cys17-Cys39, Cys41-Cys52, and Cys53-Cys58.

This sequence belongs to the three-finger toxin family. Short-chain subfamily. Type I alpha-neurotoxin sub-subfamily. Expressed by the venom gland.

It is found in the secreted. Its function is as follows. Binds to muscle nicotinic acetylcholine receptor (nAChR) and inhibit acetylcholine from binding to the receptor, thereby impairing neuromuscular transmission. This Hydrophis cyanocinctus (Asian annulated sea snake) protein is Short neurotoxin 1.